A 401-amino-acid polypeptide reads, in one-letter code: Anhydro-N-acetylmuramic acid kinase (401 aa).

25 to 32 (GTSLDGLD) contributes to the ATP binding site.

The protein belongs to the anhydro-N-acetylmuramic acid kinase family.

The enzyme catalyses 1,6-anhydro-N-acetyl-beta-muramate + ATP + H2O = N-acetyl-D-muramate 6-phosphate + ADP + H(+). It participates in amino-sugar metabolism; 1,6-anhydro-N-acetylmuramate degradation. It functions in the pathway cell wall biogenesis; peptidoglycan recycling. Functionally, catalyzes the specific phosphorylation of 1,6-anhydro-N-acetylmuramic acid (anhMurNAc) with the simultaneous cleavage of the 1,6-anhydro ring, generating MurNAc-6-P. Is required for the utilization of anhMurNAc either imported from the medium or derived from its own cell wall murein, and thus plays a role in cell wall recycling. This Pseudoalteromonas atlantica (strain T6c / ATCC BAA-1087) protein is Anhydro-N-acetylmuramic acid kinase.